The sequence spans 145 residues: Bacilliredoxin Acid345_1880 (145 aa).

This sequence belongs to the bacilliredoxin family.

The sequence is that of Bacilliredoxin Acid345_1880 from Koribacter versatilis (strain Ellin345).